The following is a 398-amino-acid chain: Phosphoglycerate kinase (398 aa).

Residues 23–25 (DFN), Arg-38, 61–64 (HMGK), Arg-122, and Arg-155 contribute to the substrate site. ATP is bound by residues Lys-206, Gly-297, Glu-328, and 354-357 (GGDS).

The protein belongs to the phosphoglycerate kinase family. In terms of assembly, monomer.

The protein localises to the cytoplasm. The enzyme catalyses (2R)-3-phosphoglycerate + ATP = (2R)-3-phospho-glyceroyl phosphate + ADP. It participates in carbohydrate degradation; glycolysis; pyruvate from D-glyceraldehyde 3-phosphate: step 2/5. The polypeptide is Phosphoglycerate kinase (Clostridium botulinum (strain Kyoto / Type A2)).